A 432-amino-acid chain; its full sequence is Adenylosuccinate synthetase (432 aa).

GTP contacts are provided by residues 13 to 19 (GDEGKGK) and 41 to 43 (GHT). D14 (proton acceptor) is an active-site residue. Mg(2+) is bound by residues D14 and G41. IMP is bound by residues 14–17 (DEGK), 39–42 (NAGH), T130, R144, Q225, T240, and R304. H42 acts as the Proton donor in catalysis. 300 to 306 (ATTGRRR) provides a ligand contact to substrate. Residues R306, 332–334 (KLD), and 415–417 (STG) contribute to the GTP site.

This sequence belongs to the adenylosuccinate synthetase family. In terms of assembly, homodimer. It depends on Mg(2+) as a cofactor.

It is found in the cytoplasm. It catalyses the reaction IMP + L-aspartate + GTP = N(6)-(1,2-dicarboxyethyl)-AMP + GDP + phosphate + 2 H(+). Its pathway is purine metabolism; AMP biosynthesis via de novo pathway; AMP from IMP: step 1/2. Plays an important role in the de novo pathway of purine nucleotide biosynthesis. Catalyzes the first committed step in the biosynthesis of AMP from IMP. In Pectobacterium atrosepticum (strain SCRI 1043 / ATCC BAA-672) (Erwinia carotovora subsp. atroseptica), this protein is Adenylosuccinate synthetase.